The sequence spans 124 residues: Large ribosomal subunit protein uL22c (124 aa).

Belongs to the universal ribosomal protein uL22 family. Part of the 50S ribosomal subunit.

It localises to the plastid. It is found in the chloroplast. Its function is as follows. This protein binds specifically to 23S rRNA. In terms of biological role, the globular domain of the protein is located near the polypeptide exit tunnel on the outside of the subunit, while an extended beta-hairpin is found that lines the wall of the exit tunnel in the center of the 70S ribosome. This is Large ribosomal subunit protein uL22c (rpl22) from Amborella trichopoda.